The chain runs to 1073 residues: Error-prone DNA polymerase (1073 aa).

Residues 41–73 (EAEPECLSTPRPGPGSTEVPGERRGSRQGERSG) are disordered. The span at 60–73 (PGERRGSRQGERSG) shows a compositional bias: basic and acidic residues.

This sequence belongs to the DNA polymerase type-C family. DnaE2 subfamily.

Its subcellular location is the cytoplasm. It catalyses the reaction DNA(n) + a 2'-deoxyribonucleoside 5'-triphosphate = DNA(n+1) + diphosphate. Its function is as follows. DNA polymerase involved in damage-induced mutagenesis and translesion synthesis (TLS). It is not the major replicative DNA polymerase. The polypeptide is Error-prone DNA polymerase (Corynebacterium efficiens (strain DSM 44549 / YS-314 / AJ 12310 / JCM 11189 / NBRC 100395)).